The chain runs to 372 residues: Cyclin-A3-2 (372 aa).

The segment at 53-73 (NQKKETQKPKRNLKPPPAKQI) is disordered.

This sequence belongs to the cyclin family. Cyclin AB subfamily.

The polypeptide is Cyclin-A3-2 (CYCA3-2) (Arabidopsis thaliana (Mouse-ear cress)).